We begin with the raw amino-acid sequence, 515 residues long: 1-pyrroline-5-carboxylate dehydrogenase (515 aa).

Catalysis depends on residues glutamate 286 and cysteine 320.

This sequence belongs to the aldehyde dehydrogenase family. RocA subfamily.

The catalysed reaction is L-glutamate 5-semialdehyde + NAD(+) + H2O = L-glutamate + NADH + 2 H(+). The protein operates within amino-acid degradation; L-proline degradation into L-glutamate; L-glutamate from L-proline: step 2/2. The protein is 1-pyrroline-5-carboxylate dehydrogenase of Bacillus cereus (strain ATCC 10987 / NRS 248).